The primary structure comprises 504 residues: Maturase K (504 aa).

Belongs to the intron maturase 2 family. MatK subfamily.

It localises to the plastid. The protein resides in the chloroplast. Its function is as follows. Usually encoded in the trnK tRNA gene intron. Probably assists in splicing its own and other chloroplast group II introns. The protein is Maturase K of Adansonia digitata (Baobab tree).